A 190-amino-acid polypeptide reads, in one-letter code: Photosynthetic NDH subunit of lumenal location 2, chloroplastic (190 aa).

The transit peptide at 1 to 31 directs the protein to the chloroplast; it reads MSSFTTTNTPPPYLLRKIYHRRVNQPFSVVC. A thylakoid-targeting transit peptide spans 32–68; the sequence is CTGEPQQDIFTRRRTLTSLITFTVIGGATSSALAQEK. Coiled coils occupy residues 87–107 and 139–159; these read EDAA…REML and ESRR…MSEL.

It belongs to the PsbQ family. In terms of assembly, part of the chloroplast NDH complex, composed of a mixture of chloroplast and nucleus encoded subunits. Component of the NDH lumenal subcomplex, at least composed of PnsL1, PnsL2, PnsL3, PnsL4 and PnsL5.

Its subcellular location is the plastid. The protein localises to the chloroplast thylakoid membrane. Its function is as follows. NDH shuttles electrons from NAD(P)H:plastoquinone, via FMN and iron-sulfur (Fe-S) centers, to quinones in the photosynthetic chain and possibly in a chloroplast respiratory chain. The immediate electron acceptor for the enzyme in this species is believed to be plastoquinone. Couples the redox reaction to proton translocation, and thus conserves the redox energy in a proton gradient. Required for both formation and activity of the chloroplast NAD(P)H dehydrogenase (NDH) complex. This is Photosynthetic NDH subunit of lumenal location 2, chloroplastic from Arabidopsis thaliana (Mouse-ear cress).